The sequence spans 415 residues: Granaticin polyketide putative beta-ketoacyl synthase 2 (415 aa).

Residues 6–406 form the Ketosynthase family 3 (KS3) domain; that stretch reads RRRAVVTGLS…GFNSAVVVTL (401 aa).

It belongs to the thiolase-like superfamily. Beta-ketoacyl-ACP synthases family.

It functions in the pathway antibiotic biosynthesis; granaticin biosynthesis. The protein is Granaticin polyketide putative beta-ketoacyl synthase 2 (gra-orf2) of Streptomyces violaceoruber.